The primary structure comprises 82 residues: Photosystem I iron-sulfur center (82 aa).

4Fe-4S ferredoxin-type domains are found at residues 2–31 (AHSV…MVPW) and 40–69 (IAAA…IRVY). The [4Fe-4S] cluster site is built by cysteine 11, cysteine 14, cysteine 17, cysteine 21, cysteine 49, cysteine 52, cysteine 55, and cysteine 59.

The cyanobacterial PSI reaction center is composed of one copy each of PsaA,B,C,D,E,F,I,J,K,L,M and X, and forms trimeric complexes. [4Fe-4S] cluster serves as cofactor.

It localises to the cellular thylakoid membrane. The enzyme catalyses reduced [plastocyanin] + hnu + oxidized [2Fe-2S]-[ferredoxin] = oxidized [plastocyanin] + reduced [2Fe-2S]-[ferredoxin]. Apoprotein for the two 4Fe-4S centers FA and FB of photosystem I (PSI); essential for photochemical activity. FB is the terminal electron acceptor of PSI, donating electrons to ferredoxin. The C-terminus interacts with PsaA/B/D and helps assemble the protein into the PSI complex. Required for binding of PsaD and PsaE to PSI. PSI is a plastocyanin/cytochrome c6-ferredoxin oxidoreductase, converting photonic excitation into a charge separation, which transfers an electron from the donor P700 chlorophyll pair to the spectroscopically characterized acceptors A0, A1, FX, FA and FB in turn. This is Photosystem I iron-sulfur center from Synechococcus sp. (strain JA-2-3B'a(2-13)) (Cyanobacteria bacterium Yellowstone B-Prime).